The sequence spans 121 residues: Large ribosomal subunit protein uL22 (121 aa).

It belongs to the universal ribosomal protein uL22 family. Part of the 50S ribosomal subunit.

Its function is as follows. This protein binds specifically to 23S rRNA; its binding is stimulated by other ribosomal proteins, e.g. L4, L17, and L20. It is important during the early stages of 50S assembly. It makes multiple contacts with different domains of the 23S rRNA in the assembled 50S subunit and ribosome. Functionally, the globular domain of the protein is located near the polypeptide exit tunnel on the outside of the subunit, while an extended beta-hairpin is found that lines the wall of the exit tunnel in the center of the 70S ribosome. In Parasynechococcus marenigrum (strain WH8102), this protein is Large ribosomal subunit protein uL22.